The following is a 155-amino-acid chain: Cytochrome c oxidase subunit 4, mitochondrial (155 aa).

The transit peptide at 1–25 directs the protein to the mitochondrion; that stretch reads MLSLRQSIRFFKPATRTLCSSRYLL. A Phosphothreonine modification is found at Thr-55. 4 residues coordinate Zn(2+): Cys-111, His-119, Cys-134, and Cys-137.

It belongs to the cytochrome c oxidase subunit 5B family. As to quaternary structure, component of the cytochrome c oxidase (complex IV, CIV), a multisubunit enzyme composed of 12 subunits. The complex is composed of a catalytic core of 3 subunits COX1, COX2 and COX3, encoded in the mitochondrial DNA, and 9 supernumerary subunits COX4, COX5A (or COX5B), COX6, COX7, COX8, COX9, COX12, COX13 and COX26, which are encoded in the nuclear genome. The complex exists as a monomer or a dimer and forms supercomplexes (SCs) in the inner mitochondrial membrane with a dimer of ubiquinol-cytochrome c oxidoreductase (cytochrome b-c1 complex, complex III, CIII), resulting in 2 different assemblies (supercomplexes III(2)IV and III(2)IV(2)).

The protein resides in the mitochondrion inner membrane. It participates in energy metabolism; oxidative phosphorylation. Component of the cytochrome c oxidase, the last enzyme in the mitochondrial electron transport chain which drives oxidative phosphorylation. The respiratory chain contains 3 multisubunit complexes succinate dehydrogenase (complex II, CII), ubiquinol-cytochrome c oxidoreductase (cytochrome b-c1 complex, complex III, CIII) and cytochrome c oxidase (complex IV, CIV), that cooperate to transfer electrons derived from NADH and succinate to molecular oxygen, creating an electrochemical gradient over the inner membrane that drives transmembrane transport and the ATP synthase. Cytochrome c oxidase is the component of the respiratory chain that catalyzes the reduction of oxygen to water. Electrons originating from reduced cytochrome c in the intermembrane space (IMS) are transferred via the dinuclear copper A center (CU(A)) of COX2 and heme A of COX1 to the active site in COX1, a binuclear center (BNC) formed by heme A3 and copper B (CU(B)). The BNC reduces molecular oxygen to 2 water molecules using 4 electrons from cytochrome c in the IMS and 4 protons from the mitochondrial matrix. The chain is Cytochrome c oxidase subunit 4, mitochondrial (COX4) from Saccharomyces cerevisiae (strain ATCC 204508 / S288c) (Baker's yeast).